Reading from the N-terminus, the 419-residue chain is Carboxypeptidase A1 (419 aa).

Positions Met1 to Ala16 are cleaved as a signal peptide. Residues Lys17–Arg110 constitute a propeptide, activation peptide. The Peptidase M14 domain occupies Thr121 to Thr414. Positions 179 and 182 each coordinate Zn(2+). Substrate is bound by residues His179–Glu182, Arg237, and Asn254–Arg255. An intrachain disulfide couples Cys248 to Cys271. His306 serves as a coordination point for Zn(2+). Substrate contacts are provided by residues Ser307–Tyr308 and Tyr358. Catalysis depends on Glu380, which acts as the Proton donor/acceptor.

The protein belongs to the peptidase M14 family. As to quaternary structure, monomer. May form a complex with proelastase 2. It depends on Zn(2+) as a cofactor.

The protein resides in the secreted. The enzyme catalyses Release of a C-terminal amino acid, but little or no action with -Asp, -Glu, -Arg, -Lys or -Pro.. It carries out the reaction leukotriene C4 + H2O = leukotriene F4 + glycine. In terms of biological role, carboxypeptidase that catalyzes the release of a C-terminal amino acid, but has little or no action with -Asp, -Glu, -Arg, -Lys or -Pro. Catalyzes the conversion of leukotriene C4 to leukotriene F4 via the hydrolysis of an amide bond. In Sus scrofa (Pig), this protein is Carboxypeptidase A1 (CPA1).